We begin with the raw amino-acid sequence, 343 residues long: GDP-D-glucose phosphorylase 1 (343 aa).

The active-site Tele-GMP-histidine intermediate is H183.

The protein belongs to the GDPGP1 family.

It localises to the cytoplasm. The enzyme catalyses GDP-alpha-D-glucose + phosphate = alpha-D-glucose 1-phosphate + GDP + H(+). In terms of biological role, specific and highly efficient GDP-D-glucose phosphorylase regulating the levels of GDP-D-glucose in cells. The sequence is that of GDP-D-glucose phosphorylase 1 (gdpgp1) from Danio rerio (Zebrafish).